A 300-amino-acid polypeptide reads, in one-letter code: Protoheme IX farnesyltransferase 1 (300 aa).

8 helical membrane passes run 26 to 46, 48 to 68, 97 to 117, 120 to 140, 148 to 168, 174 to 194, 226 to 246, and 280 to 300; these read VVVL…RAGV, WTVL…AAAV, AALA…LTFT, LTAW…TGFL, IVIG…AATG, PLLL…ALAI, FALL…VLYL, and IYYL…LLNL.

Belongs to the UbiA prenyltransferase family. Protoheme IX farnesyltransferase subfamily.

The protein resides in the cell inner membrane. It catalyses the reaction heme b + (2E,6E)-farnesyl diphosphate + H2O = Fe(II)-heme o + diphosphate. Its pathway is porphyrin-containing compound metabolism; heme O biosynthesis; heme O from protoheme: step 1/1. Its function is as follows. Converts heme B (protoheme IX) to heme O by substitution of the vinyl group on carbon 2 of heme B porphyrin ring with a hydroxyethyl farnesyl side group. The chain is Protoheme IX farnesyltransferase 1 from Pseudomonas fluorescens (strain ATCC BAA-477 / NRRL B-23932 / Pf-5).